The primary structure comprises 342 residues: MKVEKSSKGLEVLVRTQEDDLEGFSFLEIMDRVDPLPLDFENYKNFKEGIYYMCTHDGTKIGFVLKFAINEMETVCSEIFEETFQLDESRHELRFKSEDFDHRNNLIDQLARKMYLESSLSGVKGWRNEKYAVWVNKKPYVLVERAVAGVLGIITYGIHINGYVLDPKSKKVQFWVPRRSKTKQTWPLMLDNIIAGGLGYPYGIYETVLKESMEEANLEKSVIEDNIKATGSVSYLYFTGDISVTKFNKESDFIVGEVQYVYDLKLSEDIIPKPNDGEVESFNLFSLQETINALRKKEFKPNCALVMVDFLIRHGYITPENEPNYLELVTRMHRRLPFPTLN.

The 155-residue stretch at 155-309 folds into the Nudix hydrolase domain; it reads TYGIHINGYV…KPNCALVMVD (155 aa).

This is an uncharacterized protein from Saccharomyces cerevisiae (strain ATCC 204508 / S288c) (Baker's yeast).